The primary structure comprises 695 residues: GRB2-associated-binding protein 1 (695 aa).

Position 2 is an N-acetylserine (Ser2). The PH domain maps to 5–116; it reads EVVCSGWLRK…WVRCICDICG (112 aa). The tract at residues 204–229 is disordered; it reads AKPTFSETDCNDNVPSHQTPASSQSK. Positions 206–229 are enriched in polar residues; that stretch reads PTFSETDCNDNVPSHQTPASSQSK. A phosphoserine mark is found at Ser251, Ser253, Ser266, and Ser304. The tract at residues 306-387 is disordered; the sequence is SYDIPPTPGN…PAGMTPSRSN (82 aa). A compositionally biased stretch (polar residues) spans 314–334; the sequence is GNTYQIPRTFPESTLGQSSKL. At Thr388 the chain carries Phosphothreonine. 2 positions are modified to phosphoserine: Ser403 and Ser455. A disordered region spans residues 453–659; that stretch reads PNSPPRQHSG…GSSMADERVD (207 aa). Composition is skewed to polar residues over residues 457–466 and 605–617; these read PRQHSGSFTE and FASN…SSPM. A Phosphotyrosine modification is found at Tyr628. Thr639 is modified (phosphothreonine). Ser652 is subject to Phosphoserine. Tyr660 bears the Phosphotyrosine mark. The segment at 671–695 is disordered; the sequence is LKSTREAWTDGRQSTESETPTKNVK. Residues 673–685 show a composition bias toward basic and acidic residues; the sequence is STREAWTDGRQST. Position 684 is a phosphoserine (Ser684). The segment covering 686 to 695 has biased composition (polar residues); that stretch reads ESETPTKNVK.

Belongs to the GAB family. In terms of assembly, identified in a complex containing FRS2, GRB2, GAB1, PIK3R1 and SOS1. Forms a tripartite complex containing GAB1, METTL13 and SPRY2. Within the complex interacts with METTL13. Interacts with GRB2 and with other SH2-containing proteins. Interacts with phosphorylated LAT2. Interacts with PTPRJ. Interacts (phosphorylated) with PTPN11. Interacts with HCK. Phosphorylated on tyrosine residue(s) by the epidermal growth factor receptor (EGFR) and the insulin receptor (INSR). Tyrosine phosphorylation of GAB1 mediates interaction with several proteins that contain SH2 domains. Phosphorylated on tyrosine residues by HCK upon IL6 signaling. Phosphorylated in response to FGFR1 activation. In terms of tissue distribution, expressed in the inner ear (at protein level). Expression is detected in the cochlear duct, spiral limbus region, efferent and afferent nerves, and in spiral ganglion neurons (at protein level).

Its function is as follows. Adapter protein that plays a role in intracellular signaling cascades triggered by activated receptor-type kinases. Plays a role in FGFR1 signaling. Probably involved in signaling by the epidermal growth factor receptor (EGFR) and the insulin receptor (INSR). Involved in the MET/HGF-signaling pathway. The chain is GRB2-associated-binding protein 1 (Gab1) from Mus musculus (Mouse).